Here is a 301-residue protein sequence, read N- to C-terminus: Protease HtpX (301 aa).

2 helical membrane passes run 4–24 (IGLF…ILSL) and 38–58 (LGNL…ISLL). Residue histidine 147 coordinates Zn(2+). The active site involves glutamate 148. Histidine 151 contributes to the Zn(2+) binding site. Transmembrane regions (helical) follow at residues 155-175 (GDMV…MFFA) and 200-220 (FAIT…IVMW). Glutamate 226 provides a ligand contact to Zn(2+).

Belongs to the peptidase M48B family. It depends on Zn(2+) as a cofactor.

The protein localises to the cell inner membrane. The protein is Protease HtpX of Acinetobacter baylyi (strain ATCC 33305 / BD413 / ADP1).